The chain runs to 526 residues: Histidine ammonia-lyase (526 aa).

Residues 143-145 constitute a cross-link (5-imidazolinone (Ala-Gly)); the sequence is ASG. Serine 144 bears the 2,3-didehydroalanine (Ser) mark.

It belongs to the PAL/histidase family. Contains an active site 4-methylidene-imidazol-5-one (MIO), which is formed autocatalytically by cyclization and dehydration of residues Ala-Ser-Gly.

The protein localises to the cytoplasm. It catalyses the reaction L-histidine = trans-urocanate + NH4(+). Its pathway is amino-acid degradation; L-histidine degradation into L-glutamate; N-formimidoyl-L-glutamate from L-histidine: step 1/3. The sequence is that of Histidine ammonia-lyase from Aromatoleum aromaticum (strain DSM 19018 / LMG 30748 / EbN1) (Azoarcus sp. (strain EbN1)).